The following is a 178-amino-acid chain: Large ribosomal subunit protein uL16 (178 aa).

The protein belongs to the universal ribosomal protein uL16 family.

This is Large ribosomal subunit protein uL16 from Saccharolobus islandicus (strain Y.N.15.51 / Yellowstone #2) (Sulfolobus islandicus).